Reading from the N-terminus, the 215-residue chain is Ribonuclease S-6 (215 aa).

Positions 1 to 22 (MFNLPLTSVFVIFLFALSPIYG) are cleaved as a signal peptide. Gln32 provides a ligand contact to RNA. Residues Cys38 and Cys43 are joined by a disulfide bond. N-linked (GlcNAc...) asparagine glycosylation is present at Asn49. Residue His53 coordinates RNA. His53 (proton donor) is an active-site residue. The N-linked (GlcNAc...) asparagine glycan is linked to Asn59. Residues Cys67 and Cys116 are joined by a disulfide bond. RNA is bound by residues 91 to 92 (DL), Arg94, Phe105, 108 to 109 (RE), and 112 to 113 (KH). Glu109 is an active-site residue. Catalysis depends on His113, which acts as the Proton acceptor. N-linked (GlcNAc...) asparagine glycosylation is found at Asn160 and Asn172. Disulfide bonds link Cys175–Cys204 and Cys187–Cys198.

This sequence belongs to the RNase T2 family.

The protein resides in the secreted. It is found in the extracellular space. It catalyses the reaction a ribonucleotidyl-ribonucleotide-RNA + H2O = a 3'-end 3'-phospho-ribonucleotide-RNA + a 5'-end dephospho-ribonucleoside-RNA + H(+). Its function is as follows. Self-incompatibility (SI) is the inherited ability of a flowering plant to prevent self-fertilization by discriminating between self and non-self pollen during pollination. In many species of the Solanaceae, self-incompatibility is controlled by the single, multiallelic locus S. This stylar glycoprotein is associated with expression of self-incompatibility in potato. The chain is Ribonuclease S-6 from Nicotiana alata (Winged tobacco).